We begin with the raw amino-acid sequence, 197 residues long: MIASVRGTLIAVAADHVVIETGGIGWMIYAPRQVLAAPGDIGAEMRLFTCLIVREDALTLYGFKTVEQRQLFETLLSVTGVGPQAALNLLSSGTTDELRLAIATGDVARLARTPRIGKKLAERLVLELKGKLDIKGLPVAPGVSPAVAAVNAELSEMLVSLGFSSAEASTAIAALPPDAPLDLEERLRLALRYFGAR.

Positions 1 to 64 (MIASVRGTLI…EDALTLYGFK (64 aa)) are domain I. Residues 65 to 145 (TVEQRQLFET…GLPVAPGVSP (81 aa)) are domain II. The interval 146 to 153 (AVAAVNAE) is flexible linker. Residues 153-197 (ELSEMLVSLGFSSAEASTAIAALPPDAPLDLEERLRLALRYFGAR) are domain III.

Belongs to the RuvA family. In terms of assembly, homotetramer. Forms an RuvA(8)-RuvB(12)-Holliday junction (HJ) complex. HJ DNA is sandwiched between 2 RuvA tetramers; dsDNA enters through RuvA and exits via RuvB. An RuvB hexamer assembles on each DNA strand where it exits the tetramer. Each RuvB hexamer is contacted by two RuvA subunits (via domain III) on 2 adjacent RuvB subunits; this complex drives branch migration. In the full resolvosome a probable DNA-RuvA(4)-RuvB(12)-RuvC(2) complex forms which resolves the HJ.

Its subcellular location is the cytoplasm. Its function is as follows. The RuvA-RuvB-RuvC complex processes Holliday junction (HJ) DNA during genetic recombination and DNA repair, while the RuvA-RuvB complex plays an important role in the rescue of blocked DNA replication forks via replication fork reversal (RFR). RuvA specifically binds to HJ cruciform DNA, conferring on it an open structure. The RuvB hexamer acts as an ATP-dependent pump, pulling dsDNA into and through the RuvAB complex. HJ branch migration allows RuvC to scan DNA until it finds its consensus sequence, where it cleaves and resolves the cruciform DNA. The polypeptide is Holliday junction branch migration complex subunit RuvA (Roseiflexus castenholzii (strain DSM 13941 / HLO8)).